The primary structure comprises 462 residues: ATP synthase subunit beta (462 aa).

ATP is bound at residue 150–157 (GGAGVGKT).

It belongs to the ATPase alpha/beta chains family. As to quaternary structure, F-type ATPases have 2 components, CF(1) - the catalytic core - and CF(0) - the membrane proton channel. CF(1) has five subunits: alpha(3), beta(3), gamma(1), delta(1), epsilon(1). CF(0) has three main subunits: a(1), b(2) and c(9-12). The alpha and beta chains form an alternating ring which encloses part of the gamma chain. CF(1) is attached to CF(0) by a central stalk formed by the gamma and epsilon chains, while a peripheral stalk is formed by the delta and b chains. In this bacterium the a and b subunits are transcribed but do not seem to be translated, thus the ATP synthase consists of the alpha, beta, gamma, delta, epsilon and c subunits.

It localises to the cell membrane. It catalyses the reaction ATP + H2O + 4 H(+)(in) = ADP + phosphate + 5 H(+)(out). Produces ATP from ADP in the presence of a proton gradient across the membrane. The catalytic sites are hosted primarily by the beta subunits. The polypeptide is ATP synthase subunit beta (Moorella thermoacetica (strain ATCC 39073 / JCM 9320)).